Here is a 794-residue protein sequence, read N- to C-terminus: ALG-2 interacting protein X (794 aa).

Residues 1 to 385 enclose the BRO1 domain; the sequence is MLSIERKRTE…DNIEFHNQSA (385 aa). 2 coiled-coil regions span residues 499–568 and 600–655; these read SFIR…LCKK and LNES…NLDE. The interval 695–794 is disordered; it reads GVNPHSPLTS…PPYNSNNKHY (100 aa). Residues 698 to 712 are compositionally biased toward low complexity; the sequence is PHSPLTSPSPSLQSP. A compositionally biased stretch (polar residues) spans 713 to 722; sequence VNNYPNQFSS. Low complexity-rich tracts occupy residues 723-742 and 749-764; these read PQYH…YVPS and YSYN…QFGG. Residues 765 to 787 show a composition bias toward pro residues; that stretch reads PLPPPQSFSAPPPPQSFTAPPPY.

In terms of assembly, self-associates; the interaction is calcium-independent Interacts with pefa; the interaction is calcium-dependent. Interacts with pefb; the interaction is calcium-dependent.

The protein localises to the cytoplasm. The protein resides in the cytoplasmic vesicle membrane. It is found in the endosome. Its function is as follows. Unknown. Required for development but not for cell death. This chain is ALG-2 interacting protein X (alxA), found in Dictyostelium discoideum (Social amoeba).